Consider the following 106-residue polypeptide: uncharacterized protein (106 aa).

Residues 85-101 form a helical membrane-spanning segment; sequence AVALVLLCVSHHLTYLP.

It localises to the membrane. This is an uncharacterized protein from Saccharomyces cerevisiae (strain ATCC 204508 / S288c) (Baker's yeast).